Reading from the N-terminus, the 1430-residue chain is DNA-directed RNA polymerase subunit beta' (1430 aa).

Residues Cys70, Cys72, Cys85, and Cys88 each contribute to the Zn(2+) site. Mg(2+)-binding residues include Asp495, Asp497, and Asp499. The Zn(2+) site is built by Cys838, Cys912, Cys919, and Cys922.

It belongs to the RNA polymerase beta' chain family. As to quaternary structure, the RNAP catalytic core consists of 2 alpha, 1 beta, 1 beta' and 1 omega subunit. When a sigma factor is associated with the core the holoenzyme is formed, which can initiate transcription. Mg(2+) serves as cofactor. The cofactor is Zn(2+).

The enzyme catalyses RNA(n) + a ribonucleoside 5'-triphosphate = RNA(n+1) + diphosphate. In terms of biological role, DNA-dependent RNA polymerase catalyzes the transcription of DNA into RNA using the four ribonucleoside triphosphates as substrates. This Rhodospirillum centenum (strain ATCC 51521 / SW) protein is DNA-directed RNA polymerase subunit beta'.